The following is a 201-amino-acid chain: Cytochrome c oxidase subunit 3 (201 aa).

4 helical membrane-spanning segments follow: residues 25-45, 65-85, 100-120, and 137-157; these read VLGLLVFLISESLMFGGLFAA, LFVPTINTLILISSSFVIHYG, WYWITAAMGAVFLGGQVYEYL, and VMTGFHGLHVFIGILLILGVI.

It belongs to the cytochrome c oxidase subunit 3 family.

Its subcellular location is the cell membrane. It carries out the reaction 4 Fe(II)-[cytochrome c] + O2 + 8 H(+)(in) = 4 Fe(III)-[cytochrome c] + 2 H2O + 4 H(+)(out). The protein is Cytochrome c oxidase subunit 3 (ctaE) of Thermostichus vulcanus (Synechococcus vulcanus).